A 298-amino-acid polypeptide reads, in one-letter code: Homoserine kinase (298 aa).

79-89 contributes to the ATP binding site; sequence PIARGLGSSGA.

The protein belongs to the GHMP kinase family. Homoserine kinase subfamily.

Its subcellular location is the cytoplasm. The enzyme catalyses L-homoserine + ATP = O-phospho-L-homoserine + ADP + H(+). It functions in the pathway amino-acid biosynthesis; L-threonine biosynthesis; L-threonine from L-aspartate: step 4/5. Functionally, catalyzes the ATP-dependent phosphorylation of L-homoserine to L-homoserine phosphate. In Pyrobaculum islandicum (strain DSM 4184 / JCM 9189 / GEO3), this protein is Homoserine kinase.